A 398-amino-acid chain; its full sequence is Lipoyl synthase, mitochondrial (398 aa).

Residues 1–32 (MIALRVHNTRVVSRSLTVWTRPSPTLTLSRSL) constitute a mitochondrion transit peptide. Residues Cys117, Cys122, Cys128, Cys147, Cys151, Cys154, and Ser362 each coordinate [4Fe-4S] cluster. The 220-residue stretch at 132–351 (KKSEATATIM…RDTALEMGFL (220 aa)) folds into the Radical SAM core domain.

Belongs to the radical SAM superfamily. Lipoyl synthase family. It depends on [4Fe-4S] cluster as a cofactor.

The protein localises to the mitochondrion. It carries out the reaction [[Fe-S] cluster scaffold protein carrying a second [4Fe-4S](2+) cluster] + N(6)-octanoyl-L-lysyl-[protein] + 2 oxidized [2Fe-2S]-[ferredoxin] + 2 S-adenosyl-L-methionine + 4 H(+) = [[Fe-S] cluster scaffold protein] + N(6)-[(R)-dihydrolipoyl]-L-lysyl-[protein] + 4 Fe(3+) + 2 hydrogen sulfide + 2 5'-deoxyadenosine + 2 L-methionine + 2 reduced [2Fe-2S]-[ferredoxin]. It functions in the pathway protein modification; protein lipoylation via endogenous pathway; protein N(6)-(lipoyl)lysine from octanoyl-[acyl-carrier-protein]: step 2/2. Its function is as follows. Catalyzes the radical-mediated insertion of two sulfur atoms into the C-6 and C-8 positions of the octanoyl moiety bound to the lipoyl domains of lipoate-dependent enzymes, thereby converting the octanoylated domains into lipoylated derivatives. In Scheffersomyces stipitis (strain ATCC 58785 / CBS 6054 / NBRC 10063 / NRRL Y-11545) (Yeast), this protein is Lipoyl synthase, mitochondrial.